The following is a 116-amino-acid chain: uncharacterized protein (116 aa).

Residues 1–15 form the signal peptide; sequence MKKYFLILASFMLVA.

This is an uncharacterized protein from Haemophilus influenzae (strain ATCC 51907 / DSM 11121 / KW20 / Rd).